The chain runs to 270 residues: MSMQTAPIKKITLNHLQAKKNQEKIIAITAYDALFAQIFDPLVDVILVGDSLNMSFFNQNDTLNASVGMMLYHTKAVCAGAKIPFIITDMPFGSYKDEKTALKNAIRVYKETQASAIKLEGGKEKAKLVKTLTDEGVIVVGHIGLMPQFVRLDGGYKIKGKNEEQQKKLLEDALSLEEAGAGLLVLEGITTPIAQKITQTIKIPTIGIGSGKDCDGQILVWSDMLGFFDSFKPKFVREYLKGKELVQNAIKQYADDVKKGNFPNELESYH.

The Mg(2+) site is built by Asp-50 and Asp-89. 3-methyl-2-oxobutanoate contacts are provided by residues 50–51 (DS), Asp-89, and Lys-118. Residue Glu-120 participates in Mg(2+) binding. Residue Glu-187 is the Proton acceptor of the active site.

The protein belongs to the PanB family. In terms of assembly, homodecamer; pentamer of dimers. It depends on Mg(2+) as a cofactor.

It is found in the cytoplasm. It carries out the reaction 3-methyl-2-oxobutanoate + (6R)-5,10-methylene-5,6,7,8-tetrahydrofolate + H2O = 2-dehydropantoate + (6S)-5,6,7,8-tetrahydrofolate. It functions in the pathway cofactor biosynthesis; (R)-pantothenate biosynthesis; (R)-pantoate from 3-methyl-2-oxobutanoate: step 1/2. Its function is as follows. Catalyzes the reversible reaction in which hydroxymethyl group from 5,10-methylenetetrahydrofolate is transferred onto alpha-ketoisovalerate to form ketopantoate. This Helicobacter pylori (strain Shi470) protein is 3-methyl-2-oxobutanoate hydroxymethyltransferase.